A 254-amino-acid polypeptide reads, in one-letter code: Trypsin 3A1 (254 aa).

The first 20 residues, 1-20 (MNQFLFVSFCALLGLSQVSA), serve as a signal peptide directing secretion. A propeptide spans 21–27 (ATLSSGR) (activation peptide). In terms of domain architecture, Peptidase S1 spans 28–253 (IVGGFQIDIA…VRQWIREVSE (226 aa)). Cysteine 53 and cysteine 69 form a disulfide bridge. Active-site charge relay system residues include histidine 68 and aspartate 113. Disulfide bonds link cysteine 178–cysteine 194 and cysteine 205–cysteine 229. Residue serine 209 is the Charge relay system of the active site.

Belongs to the peptidase S1 family. In terms of tissue distribution, midgut.

It localises to the secreted. The protein resides in the extracellular space. It carries out the reaction Preferential cleavage: Arg-|-Xaa, Lys-|-Xaa.. In terms of biological role, major function may be to aid in digestion of the blood meal. The protein is Trypsin 3A1 of Aedes aegypti (Yellowfever mosquito).